We begin with the raw amino-acid sequence, 65 residues long: Gene product 5B (65 aa).

It belongs to the phi29likevirus GP5.5 family.

In Bacillus subtilis (Bacteriophage PZA), this protein is Gene product 5B (5B).